We begin with the raw amino-acid sequence, 473 residues long: Ribulose bisphosphate carboxylase large chain 1 (473 aa).

Substrate contacts are provided by asparagine 116 and threonine 166. Catalysis depends on lysine 168, which acts as the Proton acceptor. Lysine 170 contacts substrate. Positions 194, 196, and 197 each coordinate Mg(2+). Lysine 194 is modified (N6-carboxylysine). Histidine 287 acts as the Proton acceptor in catalysis. Substrate contacts are provided by arginine 288, histidine 320, and serine 372.

This sequence belongs to the RuBisCO large chain family. Type I subfamily. In terms of assembly, heterohexadecamer of 8 large chains and 8 small chains. Requires Mg(2+) as cofactor.

The catalysed reaction is 2 (2R)-3-phosphoglycerate + 2 H(+) = D-ribulose 1,5-bisphosphate + CO2 + H2O. The enzyme catalyses D-ribulose 1,5-bisphosphate + O2 = 2-phosphoglycolate + (2R)-3-phosphoglycerate + 2 H(+). Functionally, ruBisCO catalyzes two reactions: the carboxylation of D-ribulose 1,5-bisphosphate, the primary event in carbon dioxide fixation, as well as the oxidative fragmentation of the pentose substrate. Both reactions occur simultaneously and in competition at the same active site. This chain is Ribulose bisphosphate carboxylase large chain 1, found in Nitrobacter winogradskyi (strain ATCC 25391 / DSM 10237 / CIP 104748 / NCIMB 11846 / Nb-255).